The primary structure comprises 443 residues: Xaa-Pro dipeptidase (443 aa).

Mn(2+) is bound by residues Asp241, Asp252, His333, Glu378, and Glu417.

The protein belongs to the peptidase M24B family. Bacterial-type prolidase subfamily. Requires Mn(2+) as cofactor.

It carries out the reaction Xaa-L-Pro dipeptide + H2O = an L-alpha-amino acid + L-proline. In terms of biological role, splits dipeptides with a prolyl residue in the C-terminal position. The sequence is that of Xaa-Pro dipeptidase from Actinobacillus pleuropneumoniae serotype 5b (strain L20).